The following is a 578-amino-acid chain: Proline--tRNA ligase (578 aa).

Belongs to the class-II aminoacyl-tRNA synthetase family. ProS type 1 subfamily. As to quaternary structure, homodimer.

It localises to the cytoplasm. The catalysed reaction is tRNA(Pro) + L-proline + ATP = L-prolyl-tRNA(Pro) + AMP + diphosphate. Its function is as follows. Catalyzes the attachment of proline to tRNA(Pro) in a two-step reaction: proline is first activated by ATP to form Pro-AMP and then transferred to the acceptor end of tRNA(Pro). As ProRS can inadvertently accommodate and process non-cognate amino acids such as alanine and cysteine, to avoid such errors it has two additional distinct editing activities against alanine. One activity is designated as 'pretransfer' editing and involves the tRNA(Pro)-independent hydrolysis of activated Ala-AMP. The other activity is designated 'posttransfer' editing and involves deacylation of mischarged Ala-tRNA(Pro). The misacylated Cys-tRNA(Pro) is not edited by ProRS. This is Proline--tRNA ligase from Burkholderia ambifaria (strain ATCC BAA-244 / DSM 16087 / CCUG 44356 / LMG 19182 / AMMD) (Burkholderia cepacia (strain AMMD)).